The primary structure comprises 193 residues: Holliday junction branch migration complex subunit RuvA (193 aa).

The domain I stretch occupies residues 1-64 (MIGRIAGILL…EDAHLLYGFL (64 aa)). Residues 65 to 139 (TPQERTTFRE…GKLGADLGAL (75 aa)) form a domain II region. Residues 139-143 (LAGAA) are flexible linker. Positions 144 to 193 (SPSDHAADILNALVALGYSEKEGLAAIKNVPAGTGVSDGIKLALKALSKA) are domain III.

Belongs to the RuvA family. As to quaternary structure, homotetramer. Forms an RuvA(8)-RuvB(12)-Holliday junction (HJ) complex. HJ DNA is sandwiched between 2 RuvA tetramers; dsDNA enters through RuvA and exits via RuvB. An RuvB hexamer assembles on each DNA strand where it exits the tetramer. Each RuvB hexamer is contacted by two RuvA subunits (via domain III) on 2 adjacent RuvB subunits; this complex drives branch migration. In the full resolvosome a probable DNA-RuvA(4)-RuvB(12)-RuvC(2) complex forms which resolves the HJ.

The protein localises to the cytoplasm. In terms of biological role, the RuvA-RuvB-RuvC complex processes Holliday junction (HJ) DNA during genetic recombination and DNA repair, while the RuvA-RuvB complex plays an important role in the rescue of blocked DNA replication forks via replication fork reversal (RFR). RuvA specifically binds to HJ cruciform DNA, conferring on it an open structure. The RuvB hexamer acts as an ATP-dependent pump, pulling dsDNA into and through the RuvAB complex. HJ branch migration allows RuvC to scan DNA until it finds its consensus sequence, where it cleaves and resolves the cruciform DNA. This Burkholderia vietnamiensis (strain G4 / LMG 22486) (Burkholderia cepacia (strain R1808)) protein is Holliday junction branch migration complex subunit RuvA.